The primary structure comprises 319 residues: Epoxyqueuosine reductase (319 aa).

Residue aspartate 128 is the Proton donor of the active site. Residues 173 to 202 (EANDPHPNYCGTCTRCLSACPTAALVEPAV) enclose the 4Fe-4S ferredoxin-type domain. The [4Fe-4S] cluster site is built by cysteine 182, cysteine 185, cysteine 188, cysteine 192, cysteine 208, cysteine 236, cysteine 239, and cysteine 243.

It belongs to the QueG family. As to quaternary structure, monomer. Cob(II)alamin is required as a cofactor. It depends on [4Fe-4S] cluster as a cofactor.

It localises to the cytoplasm. The enzyme catalyses epoxyqueuosine(34) in tRNA + AH2 = queuosine(34) in tRNA + A + H2O. The protein operates within tRNA modification; tRNA-queuosine biosynthesis. Its function is as follows. Catalyzes the conversion of epoxyqueuosine (oQ) to queuosine (Q), which is a hypermodified base found in the wobble positions of tRNA(Asp), tRNA(Asn), tRNA(His) and tRNA(Tyr). In Gloeobacter violaceus (strain ATCC 29082 / PCC 7421), this protein is Epoxyqueuosine reductase.